The chain runs to 1167 residues: MSSNLAFLSLSLAESTASLGKSLEETRTRLTEKLKLVAGMALGFDQFAMHQTATGPGLSVEGKQTEQMSRKSAEDTRASSLSSDPDDGRAAQLAGQKGHVTPCIAGLIATSNPFLFTHMLALGAAYLGYDKYFGDGTSELLPFYGTRTLLSTLSPLDTPRLLDSMAAADRLSPKRSILSRFSRRKRSLDAPAPEPSGWDQKRKSRLPLGSLRLVLDILDRHLEALTTYVQQQIEIFRQAGVPLEASVTMTHNLNRLHVTRCQSRNNQMVIPCRWKDTTFFEELSNETNPGLTDEEQLEKRVKFHKLENAFNTVTGLGALEAMLDEDSVLLGGPAEESVARLYSDFHLGAAMNNWYFYDALNINKMLSRFQKVGTKVLKQYGLENLMNLATSHQAGSTASWDRTDIDTKLAKHHHYGSALRVRLYIMALLPQFTPHREGILSPVDFIREAFAGERSYAMSTARLKPLLSDDLVILGVPKGFSFLWLFEFLLEEDSPNALVAKRRALKRIPNWTKRLFSHSRSIPMLFRQFYKALNAGVFAKARRRTLDRSKTLLSRQLPEGWRDIVMDAFAFTAHSAALMQVVNYHSLFRDRTLNDLQEASYLATPPAFSIEDQSVMKRCDEQIYEWSRFGFSPDVLEADLHNETFKGKWENLRLETMPTPDTHQWWRRLHRAILDSLEIYQAHERHLKGMSDNLYTLVEDTIKNLQDGSSRDDTIFFGRIARGARESVGQKMWRGVKTFFLDLVRDVPGSDHAVWFGVGFNFPRIFQILRKMKEIALHAAGDQGSAILLDEAFVELVQETVAVRAQTYRRQPPTTLRNIGVIGLRPDYANLDTEQRSMEYQLSMCADHCVSLWVQILGFIYPYVLNPSLLTDYEKSFGTGHAIKKLDDPSYVNSFRYIFANDASLNFFEHNTPQDTRKALVSLKSGQAFMYANMMRFAGIAFEQLSMPYLAVSLQRQAPFMGQMVKDWVAKRSRSRKLAIVSVLSLGLIFAYTLLSALDIAQFLTDSGMKAIEDCSWNPIMQQMACVVVAGSGSLVAPTFAALSDVFKVGLYSGIGSTLIAASVVGNAYMIIRSQSRTILRTEMAIKNVAVKLWKQMRKYFSWVTRFTKRRKAILSTMMARATALAKNKKPRSETAATMTRSGDSVMDMLLQGVSPATPQRAQDGSR.

An N-terminal signal peptide occupies residues 1–20; sequence MSSNLAFLSLSLAESTASLG. Topologically, residues 21–977 are cytoplasmic; sequence KSLEETRTRL…WVAKRSRSRK (957 aa). The tract at residues 55-94 is disordered; sequence GPGLSVEGKQTEQMSRKSAEDTRASSLSSDPDDGRAAQLA. The segment covering 68-77 has biased composition (basic and acidic residues); it reads MSRKSAEDTR. A helical transmembrane segment spans residues 978-998; it reads LAIVSVLSLGLIFAYTLLSAL. Topologically, residues 999–1167 are extracellular; sequence DIAQFLTDSG…TPQRAQDGSR (169 aa). A disulfide bridge connects residues cysteine 1015 and cysteine 1026.

This sequence belongs to the apicomplexan parasites RON2 family.

Its subcellular location is the secreted. It is found in the host cell membrane. Its function is as follows. May play a role in host cell invasion. The sequence is that of Rhoptry neck protein 2-like protein 2 (RON2L2) from Toxoplasma gondii (strain ATCC 50611 / Me49).